The sequence spans 338 residues: 5-dehydro-2-deoxygluconokinase (338 aa).

This sequence belongs to the carbohydrate kinase PfkB family.

The enzyme catalyses 5-dehydro-2-deoxy-D-gluconate + ATP = 6-phospho-5-dehydro-2-deoxy-D-gluconate + ADP + H(+). Its pathway is polyol metabolism; myo-inositol degradation into acetyl-CoA; acetyl-CoA from myo-inositol: step 5/7. Functionally, catalyzes the phosphorylation of 5-dehydro-2-deoxy-D-gluconate (2-deoxy-5-keto-D-gluconate or DKG) to 6-phospho-5-dehydro-2-deoxy-D-gluconate (DKGP). In Mesomycoplasma hyopneumoniae (strain 7448) (Mycoplasma hyopneumoniae), this protein is 5-dehydro-2-deoxygluconokinase.